A 932-amino-acid chain; its full sequence is DNA mismatch repair protein MutS (932 aa).

Position 620–627 (620–627 (GPNMAGKS)) interacts with ATP.

This sequence belongs to the DNA mismatch repair MutS family.

In terms of biological role, this protein is involved in the repair of mismatches in DNA. It is possible that it carries out the mismatch recognition step. This protein has a weak ATPase activity. The polypeptide is DNA mismatch repair protein MutS (Lachnoclostridium phytofermentans (strain ATCC 700394 / DSM 18823 / ISDg) (Clostridium phytofermentans)).